The primary structure comprises 437 residues: RING finger protein 150 (437 aa).

The signal sequence occupies residues 1–34 (MTMSLIQACRSLALSTWLLSFCFVHLLCLDFTVA). Over 35 to 207 (EKEEWYTAFV…NLQKYVSRTS (173 aa)) the chain is Extracellular. Asparagine 45, asparagine 124, asparagine 152, and asparagine 185 each carry an N-linked (GlcNAc...) asparagine glycan. Positions 80–182 (SPKQDARGEV…PKGKEIVSLL (103 aa)) constitute a PA domain. A helical membrane pass occupies residues 208 to 228 (VVFVSISFIVLMIISLAWLVF). Over 229-437 (YYIQRFRYAN…TDQDCEEVKS (209 aa)) the chain is Cytoplasmic. The RING-type; atypical zinc finger occupies 277–318 (CAVCIEGYKPNDVVRILPCRHLFHKSCVDPWLLDHRTCPMCK).

Its subcellular location is the membrane. The protein is RING finger protein 150 (Rnf150) of Mus musculus (Mouse).